The primary structure comprises 600 residues: NADH-quinone oxidoreductase subunit C/D (600 aa).

Residues 1 to 190 (MVNNMTDLTA…DPFELTKAKQ (190 aa)) form an NADH dehydrogenase I subunit C region. Residues 214–600 (DFMFLNLGPN…IDFVMSDVDR (387 aa)) form an NADH dehydrogenase I subunit D region.

This sequence in the N-terminal section; belongs to the complex I 30 kDa subunit family. It in the C-terminal section; belongs to the complex I 49 kDa subunit family. NDH-1 is composed of 13 different subunits. Subunits NuoB, CD, E, F, and G constitute the peripheral sector of the complex.

It is found in the cell inner membrane. It carries out the reaction a quinone + NADH + 5 H(+)(in) = a quinol + NAD(+) + 4 H(+)(out). In terms of biological role, NDH-1 shuttles electrons from NADH, via FMN and iron-sulfur (Fe-S) centers, to quinones in the respiratory chain. The immediate electron acceptor for the enzyme in this species is believed to be ubiquinone. Couples the redox reaction to proton translocation (for every two electrons transferred, four hydrogen ions are translocated across the cytoplasmic membrane), and thus conserves the redox energy in a proton gradient. This chain is NADH-quinone oxidoreductase subunit C/D, found in Citrobacter koseri (strain ATCC BAA-895 / CDC 4225-83 / SGSC4696).